Here is a 525-residue protein sequence, read N- to C-terminus: Phosphoenolpyruvate carboxykinase (ATP) 1 (525 aa).

The substrate site is built by R55, Y190, and K196. Residues K196, H215, and 231-239 (GLSGTGKTT) each bind ATP. K196 and H215 together coordinate Mn(2+). D252 contributes to the Mn(2+) binding site. ATP is bound by residues E280, R317, and T442. A substrate-binding site is contributed by R317.

It belongs to the phosphoenolpyruvate carboxykinase (ATP) family. The cofactor is Mn(2+).

The protein resides in the cytoplasm. The catalysed reaction is oxaloacetate + ATP = phosphoenolpyruvate + ADP + CO2. It participates in carbohydrate biosynthesis; gluconeogenesis. Functionally, involved in the gluconeogenesis. Catalyzes the conversion of oxaloacetate (OAA) to phosphoenolpyruvate (PEP) through direct phosphoryl transfer between the nucleoside triphosphate and OAA. The protein is Phosphoenolpyruvate carboxykinase (ATP) 1 of Moorella thermoacetica (strain ATCC 39073 / JCM 9320).